The primary structure comprises 1235 residues: MSTGAFYISSLLEKMTSSDKDFRFMATSDLMSELQKDSIQLDEDSERKVVRTLLRLLEDRSGEVQNLAVKCLGPLVGKVKEYQVENIVDTLCANMRSDKEQLRDIAGIGLKTVLSELPPAATGSGLAINVCRKITGQLTSAIAQQEDVAVQLEALDILSDMLSRLGAPLGTFHASLLHCLLPQLSSPRLAVRKRTVVALGHLAAACSTDLFVELADHLVDRLPGPRAPASPAAIRTLIQCLGSVGRQAGHRLGAHLDRLVPMVEEFCNLDDDELRESCLQAFEAFLRKCPKEMDPHVPNVTSLCLQYMKHDPNYDHDSDDEEQMETEDSEFSEQESEDEYSDDDDMSWKVRRAAAKCMAALISSRPDLLPDFHCTLAPALIRRFKEREENVKADIFGAYIMLLRHTRPPKGWLEAVEEPTQTGRNLNMLRAQVPLVIKALQRQLKDRNVRTRQGCFNLFTELAGVLPGSLAEHMAVLVSGIVFSLADYSSSSTIRMDALAFLQGLLGTEPAEAFHPHLPTLLPPVMACVADPFYKVAAEALLVLQELVRTLWPLDRPRLLDPEPYVGEMSTATLARLRATDLDQEVKERAISCVGHLVGHLGDRLGDDLEPTLMLLLDRLRNEITRLPAVKALTLVAMSPLRLDLQPILAEALPILASFLRKNQRALRLATLAALDALAQSQGLGLPPPAVRTVLTELPALVSENDMHVAQLAVDFLTTVTQTQPSSLVEVSGPVLGELLQLLHSPLLPAGVLAATEGFLQALVGTRPPCVEYSELISLLTAPVYNQVGDGGPGLHKQVFHSLARCVAALSAACPQEAAGTASRLVCDAKSPHSSTGVKVLAFLSLAEVGQVAGPGPQRELKTVLLEALGSPSEDVRAAAAYALGRVGAGNLPDFLPFLLAQIEAQPRRQYLLLHALREALGAAQPDNLKPYVEDVWALLFQRCESPEEGTRCVVAECIGKLVFVNPPYLLPRFRKQLAAGQPYTRSTVITAVKFLISDQPHSIDPLLKSFIAEFMESLQDPDLNVRRATLTFFNSAVHNKPSLVRDLLDDILPLLYQETKIRRDLIREVEMGPFKHTVDDGLDVRKAAFECMYSLLESCLGQLDMCEFLNHVEDGLKDHYDIRMLTFIMLARLATLCPAPVLQRVDRLIEPLRATCTAKVKAGSVKQELEKQEELKRSAMRAVAALLTNPEVRKSPTVADFSAQIRSNPELTTLFESIQKDTASGPSTDSMELS.

Serine 2 is subject to N-acetylserine. HEAT repeat units lie at residues 2 to 39, 44 to 81, 83 to 119, 129 to 167, 171 to 208, 210 to 246, 254 to 291, 326 to 367, 371 to 408, 431 to 468, 516 to 553, 564 to 603, 607 to 644, 647 to 684, 689 to 726, 730 to 769, 771 to 812, 856 to 893, 895 to 930, 932 to 965, 966 to 1002, 1006 to 1043, 1047 to 1083, 1104 to 1140, 1156 to 1193, and 1203 to 1235; these read STGA…KDSI, DSER…KVKE, QVEN…ELPP, NVCR…RLGA, TFHA…ACST, LFVE…SVGR, AHLD…KCPK, TEDS…SRPD, DFHC…HTRP, AQVP…VLPG, PHLP…TLWP, PYVG…HLGD, DDLE…LRLD, PILA…SQGL, PAVR…TQPS, EVSG…TRPP, VEYS…ALSA, GPQR…GNLP, FLPF…DNLK, YVED…LVFV, NPPY…DQPH, PLLK…NKPS, DLLD…DDGL, LDMC…LCPA, TCTA…NPEV, and SAQI…MELS. The disordered stretch occupies residues 314 to 345; that stretch reads YDHDSDDEEQMETEDSEFSEQESEDEYSDDDD. The segment covering 317-345 has biased composition (acidic residues); the sequence is DSDDEEQMETEDSEFSEQESEDEYSDDDD.

Belongs to the CAND family. Binds TBP, CNOT3 and UBE3C. In terms of processing, ubiquitinated and targeted for proteasomal degradation. As to expression, highly expressed in embryonic limb buds.

Its subcellular location is the nucleus. Probable assembly factor of SCF (SKP1-CUL1-F-box protein) E3 ubiquitin ligase complexes that promotes the exchange of the substrate-recognition F-box subunit in SCF complexes, thereby playing a key role in the cellular repertoire of SCF complexes. The sequence is that of Cullin-associated NEDD8-dissociated protein 2 (Cand2) from Mus musculus (Mouse).